A 354-amino-acid chain; its full sequence is Uroporphyrinogen decarboxylase (354 aa).

Residues 27-31 (RQAGR), aspartate 77, tyrosine 154, serine 209, and histidine 327 each bind substrate.

Belongs to the uroporphyrinogen decarboxylase family. As to quaternary structure, homodimer.

It is found in the cytoplasm. It carries out the reaction uroporphyrinogen III + 4 H(+) = coproporphyrinogen III + 4 CO2. Its pathway is porphyrin-containing compound metabolism; protoporphyrin-IX biosynthesis; coproporphyrinogen-III from 5-aminolevulinate: step 4/4. Functionally, catalyzes the decarboxylation of four acetate groups of uroporphyrinogen-III to yield coproporphyrinogen-III. The protein is Uroporphyrinogen decarboxylase of Teredinibacter turnerae (strain ATCC 39867 / T7901).